We begin with the raw amino-acid sequence, 447 residues long: Elongation factor 1-alpha (447 aa).

The tr-type G domain occupies 5–230 (KIHISIVVIG…DQINEPKRPS (226 aa)). The segment at 14–21 (GHVDSGKS) is G1. 14-21 (GHVDSGKS) contacts GTP. The residue at position 55 (Lys-55) is an N6,N6-dimethyllysine. Positions 70–74 (GITID) are G2. Lys-79 carries the N6,N6,N6-trimethyllysine modification. The segment at 91–94 (DAPG) is G3. GTP is bound by residues 91 to 95 (DAPGH) and 153 to 156 (NKMD). The tract at residues 153 to 156 (NKMD) is G4. Lys-187 is subject to N6,N6,N6-trimethyllysine. The interval 194–196 (SGF) is G5. Lys-261 carries the post-translational modification N6-methyllysine. The residue at position 289 (Glu-289) is a 5-glutamyl glycerylphosphorylethanolamine. The residue at position 306 (Lys-306) is an N6,N6,N6-trimethyllysine. At Glu-362 the chain carries 5-glutamyl glycerylphosphorylethanolamine. Lys-396 carries the N6,N6,N6-trimethyllysine modification.

It belongs to the TRAFAC class translation factor GTPase superfamily. Classic translation factor GTPase family. EF-Tu/EF-1A subfamily.

It is found in the cytoplasm. Its function is as follows. This protein promotes the GTP-dependent binding of aminoacyl-tRNA to the A-site of ribosomes during protein biosynthesis. The protein is Elongation factor 1-alpha of Hordeum vulgare (Barley).